The sequence spans 258 residues: tRNA pseudouridine synthase A (258 aa).

The active-site Nucleophile is aspartate 53. Tyrosine 111 provides a ligand contact to substrate.

This sequence belongs to the tRNA pseudouridine synthase TruA family. As to quaternary structure, homodimer.

The enzyme catalyses uridine(38/39/40) in tRNA = pseudouridine(38/39/40) in tRNA. Formation of pseudouridine at positions 38, 39 and 40 in the anticodon stem and loop of transfer RNAs. The chain is tRNA pseudouridine synthase A from Streptococcus agalactiae serotype III (strain NEM316).